The following is a 135-amino-acid chain: 6,7-dimethyl-8-ribityllumazine synthase (135 aa).

Residues phenylalanine 12, 44-46 (AYD), and 68-70 (CVI) contribute to the 5-amino-6-(D-ribitylamino)uracil site. Residue 73–74 (AT) coordinates (2S)-2-hydroxy-3-oxobutyl phosphate. The Proton donor role is filled by histidine 76. A 5-amino-6-(D-ribitylamino)uracil-binding site is contributed by leucine 101. Residue arginine 116 coordinates (2S)-2-hydroxy-3-oxobutyl phosphate.

It belongs to the DMRL synthase family.

The catalysed reaction is (2S)-2-hydroxy-3-oxobutyl phosphate + 5-amino-6-(D-ribitylamino)uracil = 6,7-dimethyl-8-(1-D-ribityl)lumazine + phosphate + 2 H2O + H(+). It participates in cofactor biosynthesis; riboflavin biosynthesis; riboflavin from 2-hydroxy-3-oxobutyl phosphate and 5-amino-6-(D-ribitylamino)uracil: step 1/2. In terms of biological role, catalyzes the formation of 6,7-dimethyl-8-ribityllumazine by condensation of 5-amino-6-(D-ribitylamino)uracil with 3,4-dihydroxy-2-butanone 4-phosphate. This is the penultimate step in the biosynthesis of riboflavin. The sequence is that of 6,7-dimethyl-8-ribityllumazine synthase from Methanoculleus marisnigri (strain ATCC 35101 / DSM 1498 / JR1).